The primary structure comprises 959 residues: Protein NLP7 (959 aa).

The tract at residues 1–22 (MCEPDDNSARNGVTTQPSRSRE) is disordered. A compositionally biased stretch (polar residues) spans 9–18 (ARNGVTTQPS). The RWP-RK domain occupies 578–659 (KKKTEKKRGK…IESVQGTDGG (82 aa)). A coiled-coil region spans residues 633-654 (SRKIKKVNRSITKLKRVIESVQ). Polar residues-rich tracts occupy residues 673–687 (THGQ…SPNG), 694–703 (PNTNNSPNHW), and 735–745 (GTPTSHGSCDG). Positions 673–760 (THGQTSAQPL…PKVPNQDPLF (88 aa)) are disordered. The PB1 domain maps to 863-945 (TVTIKASYKD…KIVRLLVHDV (83 aa)).

Interacts with NRG2. In terms of tissue distribution, expressed in roots, stems, leaves, flowers and siliques. Detected in root hairs, emerging secondary roots, vascular tissues, leaf parenchyma cells and stomata.

It is found in the nucleus. In terms of biological role, transcription factor involved in regulation of nitrate assimilation and in transduction of the nitrate signal. This Arabidopsis thaliana (Mouse-ear cress) protein is Protein NLP7 (NLP7).